Consider the following 572-residue polypeptide: Proline--tRNA ligase (572 aa).

Belongs to the class-II aminoacyl-tRNA synthetase family. ProS type 1 subfamily. Homodimer.

The protein localises to the cytoplasm. It carries out the reaction tRNA(Pro) + L-proline + ATP = L-prolyl-tRNA(Pro) + AMP + diphosphate. Functionally, catalyzes the attachment of proline to tRNA(Pro) in a two-step reaction: proline is first activated by ATP to form Pro-AMP and then transferred to the acceptor end of tRNA(Pro). As ProRS can inadvertently accommodate and process non-cognate amino acids such as alanine and cysteine, to avoid such errors it has two additional distinct editing activities against alanine. One activity is designated as 'pretransfer' editing and involves the tRNA(Pro)-independent hydrolysis of activated Ala-AMP. The other activity is designated 'posttransfer' editing and involves deacylation of mischarged Ala-tRNA(Pro). The misacylated Cys-tRNA(Pro) is not edited by ProRS. The protein is Proline--tRNA ligase of Buchnera aphidicola subsp. Acyrthosiphon pisum (strain 5A).